The chain runs to 257 residues: Pyrroline-5-carboxylate reductase (257 aa).

This sequence belongs to the pyrroline-5-carboxylate reductase family.

It localises to the cytoplasm. The enzyme catalyses L-proline + NADP(+) = (S)-1-pyrroline-5-carboxylate + NADPH + 2 H(+). The catalysed reaction is L-proline + NAD(+) = (S)-1-pyrroline-5-carboxylate + NADH + 2 H(+). Its pathway is amino-acid biosynthesis; L-proline biosynthesis; L-proline from L-glutamate 5-semialdehyde: step 1/1. Its function is as follows. Catalyzes the reduction of 1-pyrroline-5-carboxylate (PCA) to L-proline. The polypeptide is Pyrroline-5-carboxylate reductase (Helicobacter pylori (strain ATCC 700392 / 26695) (Campylobacter pylori)).